A 1400-amino-acid polypeptide reads, in one-letter code: Alpha-(1-&gt;3)-arabinofuranosyltransferase (1400 aa).

The signal sequence occupies residues 1–30 (MAPLSRKWLPVVGAVALALTFAQSPGQVSP). Transmembrane regions (helical) follow at residues 67-87 (YLFP…PGWV), 91-111 (LWWA…AEAL), 139-159 (ISSE…TILA), 179-199 (VALM…PAVI), 215-235 (AWWL…LTQL), 282-302 (LVTG…GLAG), 314-334 (LVTM…GGLA), and 401-421 (VAVA…AWTG). Residues 700-883 (AEPVVGGWTG…WDLGSELLGR (184 aa)) enclose the F5/8 type C domain. The next 4 helical transmembrane spans lie at 1256–1276 (LYRA…LLAF), 1297–1317 (WAAA…GVMV), 1338–1358 (VTVG…SRHP), and 1369–1389 (WASV…SVVA).

Its subcellular location is the membrane. The enzyme catalyses Adds an alpha-D-arabinofuranosyl group from trans,octacis-decaprenylphospho-beta-D-arabinofuranose at the 3-O-position of an alpha-(1-&gt;5)-arabinofuranan chain attached to a beta-(1-&gt;5)-galactofuranan chain.. Its pathway is cell wall biogenesis; cell wall polysaccharide biosynthesis. Involved in the biosynthesis of the arabinogalactan (AG) region of the mycolylarabinogalactan-peptidoglycan (mAGP) complex, an essential component of the mycobacterial cell wall. Catalyzes the addition of an arabinofuranosyl (Araf) residue from the sugar donor decaprenyl-phospho-arabinose (DPA) on the C-3 of an alpha-(1-&gt;5)-linked Araf from the arabinan backbone of AG. This Mycobacterium tuberculosis (strain ATCC 25618 / H37Rv) protein is Alpha-(1-&gt;3)-arabinofuranosyltransferase (aftD).